Consider the following 242-residue polypeptide: Biosynthetic peptidoglycan transglycosylase (242 aa).

The helical transmembrane segment at L12–P32 threads the bilayer.

This sequence belongs to the glycosyltransferase 51 family.

It is found in the cell inner membrane. The catalysed reaction is [GlcNAc-(1-&gt;4)-Mur2Ac(oyl-L-Ala-gamma-D-Glu-L-Lys-D-Ala-D-Ala)](n)-di-trans,octa-cis-undecaprenyl diphosphate + beta-D-GlcNAc-(1-&gt;4)-Mur2Ac(oyl-L-Ala-gamma-D-Glu-L-Lys-D-Ala-D-Ala)-di-trans,octa-cis-undecaprenyl diphosphate = [GlcNAc-(1-&gt;4)-Mur2Ac(oyl-L-Ala-gamma-D-Glu-L-Lys-D-Ala-D-Ala)](n+1)-di-trans,octa-cis-undecaprenyl diphosphate + di-trans,octa-cis-undecaprenyl diphosphate + H(+). The protein operates within cell wall biogenesis; peptidoglycan biosynthesis. In terms of biological role, peptidoglycan polymerase that catalyzes glycan chain elongation from lipid-linked precursors. This chain is Biosynthetic peptidoglycan transglycosylase, found in Stutzerimonas stutzeri (strain A1501) (Pseudomonas stutzeri).